Consider the following 168-residue polypeptide: MAQEEEDVRDYNLTEEQKATKDKYPPVNRKYEYLDHTADVQLHAWGDTLEEAFEQCAMAMFGYMTDTGTVEPLRTVEVETQGDDLQSLLFHFLDEWLYKFSADEYFIPREVKVLNIDQKNFKLRSIGWGEEFSLSKHPQGTEVKAITYSAMQVYNEEKPEVFFVIIDI.

N-acetylalanine is present on Ala2. Ca(2+) is bound by residues Asp39, Asp167, and Ile168.

It belongs to the archease family. In terms of assembly, component of the tRNA-splicing ligase complex.

Functionally, component of the tRNA-splicing ligase complex required to facilitate the enzymatic turnover of catalytic subunit RTCB. Together with DDX1, acts by facilitating the guanylylation of RTCB, a key intermediate step in tRNA ligation. The sequence is that of Protein archease (Zbtb8os) from Mus musculus (Mouse).